Reading from the N-terminus, the 846-residue chain is Protein kintoun (846 aa).

Disordered regions lie at residues 216 to 240 (TAEE…GKPE), 372 to 405 (LRHF…DSKA), 574 to 631 (QALK…ESAC), and 762 to 846 (KKNQ…EMDD). The segment covering 372–382 (LRHFSREDSGV) has biased composition (basic and acidic residues). The residue at position 380 (Ser380) is a Phosphoserine. A compositionally biased stretch (acidic residues) spans 391 to 400 (PVEEDPDGEL). A compositionally biased stretch (basic and acidic residues) spans 583–603 (GTKEEEEKGNQDQEPESDKQH). Basic residues-rich tracts occupy residues 611–622 (KAGKKQRKRNKK) and 762–776 (KKNQ…RAQQ). Residue Ser780 is modified to Phosphoserine. Over residues 795-809 (LKQQENQSRNCNKPN) the composition is skewed to polar residues.

Belongs to the PIH1 family. Kintoun subfamily. As to quaternary structure, interacts with Pp1alpha-96A, Pp1-87B, Pp1-13C and flw.

The protein resides in the cytoplasm. Its function is as follows. Required for cytoplasmic pre-assembly of axonemal dyneins, thereby playing a central role in motility in cilia and flagella. Involved in pre-assembly of dynein arm complexes in the cytoplasm before intraflagellar transport loads them for the ciliary compartment. The chain is Protein kintoun from Drosophila yakuba (Fruit fly).